Consider the following 395-residue polypeptide: Phosphonoacetaldehyde reductase (395 aa).

Positions 199, 268, and 282 each coordinate Fe cation.

Belongs to the iron-containing alcohol dehydrogenase family. It depends on Fe cation as a cofactor.

The catalysed reaction is 2-hydroxyethylphosphonate + NAD(+) = phosphonoacetaldehyde + NADH + H(+). It participates in secondary metabolite biosynthesis; bialaphos biosynthesis. Functionally, catalyzes the reduction of phosphonoacetaldehyde to 2-hydroxyethylphosphonate, a step in the biosynthesis of phosphinothricin tripeptide. Phosphinothricin tripeptide (PTT), also known as bialaphos (BA), is a natural-product antibiotic and potent herbicide. Can use both NAD and NADP but the preferred substrate is NAD. The chain is Phosphonoacetaldehyde reductase (phpC) from Streptomyces viridochromogenes (strain DSM 40736 / JCM 4977 / BCRC 1201 / Tue 494).